The primary structure comprises 272 residues: MKMFDNIKNVGKLIRLERIFDKKSEKTVIIPMDHGVSSGPLDGIKDMRITTNAVADGGANAVLGHKGLVRHGHRGYGRDIGLIIHMSAGTSISPDPNKKVIVTTVEDAIRLGADAVSLHVNVGAESDFEMYRDLGLISETCEQWGMPLIAMMYPRGPKIKDEKDPEVVAHAARLGAELGADIIKTNYTGDPDTFKEVVKGCPAPIVIAGGPKTNTDEEFLQMVKDAMHAGGKGVASGRNVFQHKDVKGITSAICKIVHEDAEVKEALKEIKI.

Residue D33 is the Proton acceptor of the active site. 1-deoxy-D-threo-hexo-2,5-diulose 6-phosphate is bound by residues 33-37 (DHGVS) and 153-155 (YPR). Catalysis depends on Y153, which acts as the Proton donor. K184 (schiff-base intermediate with substrate) is an active-site residue. 1-deoxy-D-threo-hexo-2,5-diulose 6-phosphate is bound by residues 209–210 (GG) and 237–238 (GR).

The protein belongs to the DeoC/FbaB aldolase family. ADHS subfamily. Homodecamer.

It carries out the reaction 1-deoxy-D-threo-hexo-2,5-diulose 6-phosphate + L-aspartate 4-semialdehyde = 2,3-dioxopropyl phosphate + 2-amino-2,3,7-trideoxy-D-lyxo-hept-6-ulosonate. In terms of biological role, catalyzes a transaldol reaction between 6-deoxy-5-ketofructose 1-phosphate (DKFP) and L-aspartate semialdehyde (ASA) with an elimination of hydroxypyruvaldehyde phosphate to yield 2-amino-3,7-dideoxy-D-threo-hept-6-ulosonate (ADH). Plays a key role in an alternative pathway of the biosynthesis of 3-dehydroquinate (DHQ), which is involved in the canonical pathway for the biosynthesis of aromatic amino acids. In Methanococcus maripaludis (strain C5 / ATCC BAA-1333), this protein is 2-amino-3,7-dideoxy-D-threo-hept-6-ulosonate synthase.